The following is a 370-amino-acid chain: Cytochrome b (370 aa).

4 helical membrane-spanning segments follow: residues 30–50 (FGSMLGMVLIFQILTGTFLAF), 74–96 (WVFRIFHFNGASLFFIFLYLHIF), 109–129 (VWMSGLTIYLLVMMEAFMGYV), and 175–195 (FFVLHFLLPWAILVIVLGHLI). The heme b site is built by H80 and H94. The heme b site is built by H179 and H193. Residue H198 participates in a ubiquinone binding. A run of 4 helical transmembrane segments spans residues 221–240 (YLGKDAYNIVIWLLFIVLSL), 284–304 (VLGVIALLMSIVTFYFFALVN), 316–336 (FLVFMFIISSTILSWLGQCTV), and 342–362 (ILSPLFSFIYFGLAYLMLFIF).

This sequence belongs to the cytochrome b family. The main subunits of complex b-c1 are: cytochrome b, cytochrome c1 and the Rieske protein. Heme b is required as a cofactor.

It localises to the mitochondrion inner membrane. Component of the ubiquinol-cytochrome c reductase complex (complex III or cytochrome b-c1 complex) that is part of the mitochondrial respiratory chain. The b-c1 complex mediates electron transfer from ubiquinol to cytochrome c. Contributes to the generation of a proton gradient across the mitochondrial membrane that is then used for ATP synthesis. The polypeptide is Cytochrome b (Caenorhabditis elegans).